Reading from the N-terminus, the 413-residue chain is Hemolin (413 aa).

An N-terminal signal peptide occupies residues 1-18 (MVSKSIVALAACVAMCVA). 4 Ig-like C2-type domains span residues 25–112 (PVLK…HIIS), 121–215 (PTTF…LVGY), 233–322 (PMYV…VKLT), and 327–411 (PRFT…TLVI). Intrachain disulfides connect cysteine 46–cysteine 97, cysteine 141–cysteine 199, cysteine 252–cysteine 305, and cysteine 349–cysteine 395. N-linked (GlcNAc...) asparagine glycosylation is present at asparagine 283.

The protein belongs to the hemolin family. Hemolymph.

It is found in the secreted. Functionally, insect-immune protein with antimicrobial activity. Forms a protein complex at the bacterial surface. Can inhibit hemocyte aggregation. The chain is Hemolin from Manduca sexta (Tobacco hawkmoth).